Here is a 444-residue protein sequence, read N- to C-terminus: N-succinylarginine dihydrolase (444 aa).

Substrate contacts are provided by residues 19-28 (AGLSFGNVAS), asparagine 110, and 137-138 (HR). Residue glutamate 174 is part of the active site. Arginine 214 contributes to the substrate binding site. The active site involves histidine 250. Substrate is bound by residues aspartate 252 and asparagine 362. Catalysis depends on cysteine 368, which acts as the Nucleophile.

The protein belongs to the succinylarginine dihydrolase family. In terms of assembly, homodimer.

It carries out the reaction N(2)-succinyl-L-arginine + 2 H2O + 2 H(+) = N(2)-succinyl-L-ornithine + 2 NH4(+) + CO2. It participates in amino-acid degradation; L-arginine degradation via AST pathway; L-glutamate and succinate from L-arginine: step 2/5. In terms of biological role, catalyzes the hydrolysis of N(2)-succinylarginine into N(2)-succinylornithine, ammonia and CO(2). The sequence is that of N-succinylarginine dihydrolase from Shewanella denitrificans (strain OS217 / ATCC BAA-1090 / DSM 15013).